The following is a 407-amino-acid chain: Imidazolonepropionase (407 aa).

Fe(3+) contacts are provided by histidine 68 and histidine 70. Positions 68 and 70 each coordinate Zn(2+). Residues arginine 77, tyrosine 140, and histidine 173 each contribute to the 4-imidazolone-5-propanoate site. Tyrosine 140 is an N-formimidoyl-L-glutamate binding site. A Fe(3+)-binding site is contributed by histidine 238. Position 238 (histidine 238) interacts with Zn(2+). Residue glutamine 241 coordinates 4-imidazolone-5-propanoate. Residue aspartate 313 coordinates Fe(3+). Residue aspartate 313 coordinates Zn(2+). Positions 315 and 317 each coordinate N-formimidoyl-L-glutamate. Threonine 318 contributes to the 4-imidazolone-5-propanoate binding site.

Belongs to the metallo-dependent hydrolases superfamily. HutI family. Zn(2+) is required as a cofactor. Fe(3+) serves as cofactor.

The protein localises to the cytoplasm. The catalysed reaction is 4-imidazolone-5-propanoate + H2O = N-formimidoyl-L-glutamate. It participates in amino-acid degradation; L-histidine degradation into L-glutamate; N-formimidoyl-L-glutamate from L-histidine: step 3/3. Catalyzes the hydrolytic cleavage of the carbon-nitrogen bond in imidazolone-5-propanoate to yield N-formimidoyl-L-glutamate. It is the third step in the universal histidine degradation pathway. This Burkholderia cenocepacia (strain HI2424) protein is Imidazolonepropionase.